We begin with the raw amino-acid sequence, 236 residues long: Small ribosomal subunit protein uS2c (236 aa).

The protein belongs to the universal ribosomal protein uS2 family.

The protein resides in the plastid. Its subcellular location is the chloroplast. In Nandina domestica (Heavenly bamboo), this protein is Small ribosomal subunit protein uS2c (rps2).